Consider the following 156-residue polypeptide: tRNA-specific adenosine deaminase (156 aa).

Residues 2–120 (TNDIYFMTLA…GSLMNLLQQS (119 aa)) form the CMP/dCMP-type deaminase domain. H53 contributes to the Zn(2+) binding site. The Proton donor role is filled by E55. 2 residues coordinate Zn(2+): C83 and C86.

It belongs to the cytidine and deoxycytidylate deaminase family. In terms of assembly, homodimer. Zn(2+) serves as cofactor.

The enzyme catalyses adenosine(34) in tRNA + H2O + H(+) = inosine(34) in tRNA + NH4(+). Catalyzes the deamination of adenosine to inosine at the wobble position 34 of tRNA(Arg2). The protein is tRNA-specific adenosine deaminase of Staphylococcus aureus (strain Mu50 / ATCC 700699).